A 294-amino-acid chain; its full sequence is Single-stranded nucleic acid-binding protein (294 aa).

Residues 1–30 form a disordered region; that stretch reads MSAEIEEATNAVNNLSINDSEQQPRAPTHK. S2 carries the N-acetylserine modification. Phosphoserine occurs at positions 2 and 16. The segment covering 10–25 has biased composition (polar residues); sequence NAVNNLSINDSEQQPR. The RRM 1 domain occupies 37–119; that stretch reads DTIFIGNVAH…REIHIKRART (83 aa). T49 carries the post-translational modification Phosphothreonine. S66 bears the Phosphoserine mark. A phosphothreonine mark is found at T91 and T119. At R125 the chain carries Omega-N-methylarginine. The segment at 131–151 is RNA-binding RGG-box; the sequence is RGGFRGRGGFRGGFRGGYRGG. R135, R137, and R141 each carry dimethylated arginine. R145 is modified (dimethylated arginine; alternate). At R145 the chain carries Omega-N-methylarginine; alternate. Position 149 is an omega-N-methylarginine (R149). Over residues 151 to 169 the composition is skewed to gly residues; the sequence is GFRGRGNFRGRGGARGGFN. The interval 151-171 is disordered; it reads GFRGRGNFRGRGGARGGFNGQ. Dimethylated arginine occurs at positions 153, 155, and 159. Dimethylated arginine; alternate is present on residues R161 and R165. An omega-N-methylarginine; alternate mark is found at R161 and R165. Positions 186–274 constitute an RRM 2 domain; that stretch reads DTLYINNVPF…RELTVDVAVI (89 aa). Residue T242 is modified to Phosphothreonine. Residue S244 is modified to Phosphoserine. Residues 275-294 form a disordered region; it reads RPENDEEEIEQETGSEEKQE. Residues 278-288 are compositionally biased toward acidic residues; the sequence is NDEEEIEQETG. T287 is subject to Phosphothreonine. Position 289 is a phosphoserine (S289).

The protein belongs to the RRM GAR family. Associated with snR10 and snR11 small nuclear RNAs.

The protein localises to the cytoplasm. It is found in the nucleus. It localises to the nucleolus. Its subcellular location is the P-body. The protein resides in the stress granule. Its function is as follows. Functions in the transition of mRNAs from translation to an mRNP complex destined for decapping. High-copy-number suppressor of decapping defects. Overexpression suppresses decapping defects in both DCP1-2 and DCP2-7 mutations. Acts to promote translational repression of mRNA in conjunction with DHH1 and subsequent mRNA localization to P bodies. Promotes translational repression of mRNA during glucose deprivation. This chain is Single-stranded nucleic acid-binding protein (SBP1), found in Saccharomyces cerevisiae (strain ATCC 204508 / S288c) (Baker's yeast).